The chain runs to 395 residues: Long-chain-alcohol dehydrogenase 1 (395 aa).

Residues 98–102 and 141–144 contribute to the NAD(+) site; these read GSALD and TTSG.

The protein belongs to the iron-containing alcohol dehydrogenase family. As to quaternary structure, homooctamer.

The enzyme catalyses glycerol + NAD(+) = dihydroxyacetone + NADH + H(+). It catalyses the reaction a long-chain primary fatty alcohol + 2 NAD(+) + H2O = a long-chain fatty acid + 2 NADH + 3 H(+). Long-chain alkyl alcohol dehydrogenase that can oxidize a broad range of alkyl alcohols from ethanol to 1-triacontanol (C2 to C30) as well as 1,3-propanediol and acetaldehyde. The best substrate is ethanol. Also oxidizes glycerol. The polypeptide is Long-chain-alcohol dehydrogenase 1 (adh1) (Geobacillus thermodenitrificans (strain NG80-2)).